A 314-amino-acid polypeptide reads, in one-letter code: Aromatic prenyltransferase (314 aa).

This sequence belongs to the aromatic prenyltransferase family.

Its function is as follows. Prenyltransferase that attaches isoprenoid moieties to carbon atoms of aromatic substrates in an enzyme-catalyzed Friedel-Crafts reaction. This is Aromatic prenyltransferase from Arthroderma otae (strain ATCC MYA-4605 / CBS 113480) (Microsporum canis).